We begin with the raw amino-acid sequence, 333 residues long: Probable G-protein coupled receptor 33 (333 aa).

The Extracellular portion of the chain corresponds to 1–30; the sequence is MDLINSTDYLINASTLVRNSTQFLAPASKM. N-linked (GlcNAc...) asparagine glycosylation is found at Asn-5, Asn-12, and Asn-19. A helical membrane pass occupies residues 31-53; that stretch reads IIALSLYISSIIGTITNGLYLWV. Residues 54-64 lie on the Cytoplasmic side of the membrane; it reads LRFKMKQTVNT. The helical transmembrane segment at 65–86 threads the bilayer; the sequence is LLFFHLILSYFISTMILPFMAT. Over 87–103 the chain is Extracellular; it reads SQLQDNHWNFGTALCKV. Cysteines 101 and 179 form a disulfide. A helical membrane pass occupies residues 104-124; it reads FNGTLSLGMFTSVFFLSAIGL. Residues 125–143 lie on the Cytoplasmic side of the membrane; the sequence is DRYLLTLHPVWSQQHRTPR. The chain crosses the membrane as a helical span at residues 144 to 165; the sequence is WASSIVLGVWISAAALSIPYLI. Over 166 to 209 the chain is Extracellular; the sequence is FRETHHDRKGKVTCQNNYAVSTNWESKEMQASRQWIHVACFISR. The helical transmembrane segment at 210–230 threads the bilayer; it reads FLLGFLLPFFIIIFCYERVAS. Residues 231–246 lie on the Cytoplasmic side of the membrane; it reads KVKERSLFKSSKPFKV. A helical transmembrane segment spans residues 247-268; it reads MMTAIISFFVCWMPYHIHQGLL. The Extracellular segment spans residues 269–283; sequence LTTNQSLLLELTLIL. N-linked (GlcNAc...) asparagine glycosylation is present at Asn-272. Residues 284 to 303 traverse the membrane as a helical segment; sequence TVLTTSFNTIFSPTLYLFVG. Residues 304 to 333 lie on the Cytoplasmic side of the membrane; that stretch reads ENFKKVFKKSILALFESTFSEDSSVERTQT.

This sequence belongs to the G-protein coupled receptor 1 family. As to expression, expressed in spleen, lung, heart, liver, kidney, pancreas, thymus, gonads and leukocytes.

The protein resides in the cell membrane. Orphan receptor; could be a chemoattractant receptor. The sequence is that of Probable G-protein coupled receptor 33 (GPR33) from Homo sapiens (Human).